The following is a 401-amino-acid chain: Elongation factor Tu 2 (401 aa).

The tr-type G domain occupies 10–209 (KPHVNVGTIG…AVDEYIPTPV (200 aa)). The interval 19–26 (GHVDHGKT) is G1. 19–26 (GHVDHGKT) lines the GTP pocket. Threonine 26 contacts Mg(2+). The G2 stretch occupies residues 60–64 (GITIA). Residues 81–84 (DCPG) are G3. Residues 81 to 85 (DCPGH) and 136 to 139 (NKVD) contribute to the GTP site. The segment at 136-139 (NKVD) is G4. The segment at 174-176 (SAL) is G5.

Belongs to the TRAFAC class translation factor GTPase superfamily. Classic translation factor GTPase family. EF-Tu/EF-1A subfamily. In terms of assembly, monomer.

Its subcellular location is the cytoplasm. It catalyses the reaction GTP + H2O = GDP + phosphate + H(+). In terms of biological role, GTP hydrolase that promotes the GTP-dependent binding of aminoacyl-tRNA to the A-site of ribosomes during protein biosynthesis. The sequence is that of Elongation factor Tu 2 from Roseiflexus castenholzii (strain DSM 13941 / HLO8).